Here is a 110-residue protein sequence, read N- to C-terminus: Ferredoxin (110 aa).

2 4Fe-4S ferredoxin-type domains span residues 2-30 (TYIV…YEGE) and 31-60 (FMLV…PESP). [3Fe-4S] cluster contacts are provided by cysteine 9 and cysteine 17. Residues cysteine 21, cysteine 40, cysteine 43, and cysteine 46 each coordinate [4Fe-4S] cluster. Cysteine 50 is a binding site for [3Fe-4S] cluster.

[4Fe-4S] cluster is required as a cofactor. Requires [3Fe-4S] cluster as cofactor.

In terms of biological role, ferredoxins are iron-sulfur proteins that transfer electrons in a wide variety of metabolic reactions. This chain is Ferredoxin (fdxA), found in Rickettsia typhi (strain ATCC VR-144 / Wilmington).